A 446-amino-acid chain; its full sequence is MKNSSSMLKGVKSFIGSGIYTNKPIYDVAIVGGGIVGLATGRELLKRNPKLKIVILEKENEIAPHQSSHNSGVIHCGIYYKPGSLRAKLCTKGSKLMYDYCNENQINYENCGKLIVATKKEEFQQLEQLYKRGIENGVPNIKLLESKEQLLSIEPFINGGLRAIHTPSTGIIDYKEVSKSFGNDITEKFGKDSKSEIKLNFNAKNFKYNSNDKLLLISTGDDDDDEEQQQSILTKYSIVCGGMNSDRIAKVAYGNDEPSIVPFRGSFLQFKPEFRHLIKGNVYPLPNASFPFLGVHFTKRINGEVWLGPNAVLSFDREGYKFTDFNLHDTIDLIKNPGLFKLAKKHWKYGLGELYRDFNKDHFIQLLKPYMPNITVDMLEYGGSGVRSQAISKSGDLIEDFIFDTPSDVPIIHVRNSPSPAATSSLAIAIEIVDLAQNNFKNLNSL.

Residues 1 to 28 (MKNSSSMLKGVKSFIGSGIYTNKPIYDV) constitute a mitochondrion transit peptide.

The protein belongs to the L2HGDH family. FAD serves as cofactor.

The protein localises to the mitochondrion. It catalyses the reaction (S)-2-hydroxyglutarate + A = 2-oxoglutarate + AH2. The protein is L-2-hydroxyglutarate dehydrogenase, mitochondrial (l2hgdh) of Dictyostelium discoideum (Social amoeba).